Consider the following 399-residue polypeptide: Alpha-ketoglutarate-dependent dioxygenase fc-dox (399 aa).

Residues histidine 158 and aspartate 160 each contribute to the Fe cation site. Threonine 203 lines the 2-oxoglutarate pocket. Histidine 355 is a binding site for Fe cation. Position 367 (arginine 367) interacts with 2-oxoglutarate. Positions 371-399 (QGWLAGDRPPKGPVPIPDPRARSSIYYQK) are disordered.

This sequence belongs to the TfdA dioxygenase family. The cofactor is Fe(2+).

Its pathway is mycotoxin biosynthesis. In terms of biological role, alpha-ketoglutarate-dependent dioxygenase; part of the 2 gene clusters that mediate the biosynthesis of fusicoccins, diterpene glucosides that display phytohormone-like activity and function as potent activators of plasma membrane H(+)-ATPases in plants by modifying 14-3-3 proteins and cause the plant disease constriction canker. The first step in the pathway is performed by the fusicoccadiene synthase PaFS that possesses both prenyl transferase and terpene cyclase activity, converting isopentenyl diphosphate and dimethylallyl diphosphate into geranylgeranyl diphosphate (GGDP) and successively converting GGDP into fusicocca-2,10(14)-diene, a precursor for fusicoccin H. The second step is the oxidation at the C-8 position by the cytochrome P450 monooxygenase PaP450-2 to yield fusicocca-2,10(14)-diene-8-beta-ol. The cytochrome P450 monooxygenase PaP450-1 then catalyzes the hydroxylation at the C-16 position to produce fusicocca-2,10(14)-diene-8-beta,16-diol. The dioxygenase fc-dox then catalyzes the 16-oxydation of fusicocca-2,10(14)-diene-8-beta,16-diol to yield an aldehyde (8-beta-hydroxyfusicocca-1,10(14)-dien-16-al). The short-chain dehydrogenase/reductase fc-sdr catalyzes the reduction of the aldehyde to yield fusicocca-1,10(14)-diene-8-beta,16-diol. The next step is the hydroxylation at C-9 performed by the cytochrome P450 monooxygenase PaP450-3 that leads to fusicoccin H aglycon which is glycosylated to fusicoccin H by the O-glycosyltransferase PaGT. Hydroxylation at C-12 by the cytochrome P450 monooxygenase PaP450-4 leads then to the production of fusicoccin Q and is followed by methylation by the O-methyltransferase PaMT to yield fusicoccin P. Fusicoccin P is further converted to fusicoccin J via prenylation by the O-glucose prenyltransferase PaPT. Cytochrome P450 monooxygenase PaP450-5 then performs hydroxylation at C-19 to yield dideacetyl-fusicoccin A which is acetylated to 3'-O-deacetyl-fusicoccin A by the O-acetyltransferase PaAT-2. Finally, a another acetylation by the O-acetyltransferase PaAT-1 yields fusicoccin A. The polypeptide is Alpha-ketoglutarate-dependent dioxygenase fc-dox (Phomopsis amygdali (Fusicoccum amygdali)).